The chain runs to 260 residues: Snake venom serine protease KN14 (260 aa).

Residues 1-18 form the signal peptide; it reads MVLIRVLANLLILQLSYA. Positions 19–24 are excised as a propeptide; the sequence is QKSSEL. In terms of domain architecture, Peptidase S1 spans 25-251; the sequence is VIGGDECNIN…HLDWIQSIIA (227 aa). 5 cysteine pairs are disulfide-bonded: cysteine 31–cysteine 165, cysteine 100–cysteine 258, cysteine 144–cysteine 212, cysteine 176–cysteine 191, and cysteine 202–cysteine 227. Catalysis depends on histidine 67, which acts as the Charge relay system. Residue asparagine 105 is glycosylated (N-linked (GlcNAc...) asparagine). Residue aspartate 112 is the Charge relay system of the active site. N-linked (GlcNAc...) asparagine glycosylation is present at asparagine 172. The Charge relay system role is filled by serine 206. Residues asparagine 213 and asparagine 255 are each glycosylated (N-linked (GlcNAc...) asparagine).

Belongs to the peptidase S1 family. Snake venom subfamily. In terms of assembly, monomer. As to expression, expressed by the venom gland.

It is found in the secreted. Functionally, snake venom serine protease that may act in the hemostasis system of the prey. The polypeptide is Snake venom serine protease KN14 (Trimeresurus stejnegeri (Chinese green tree viper)).